A 431-amino-acid polypeptide reads, in one-letter code: Chaperone SurA (431 aa).

Positions 1–20 (MKNWRTFILGLALCANGALA) are cleaved as a signal peptide. PpiC domains lie at 171-272 (GAEF…KVND) and 282-382 (VTEV…QLID).

The protein resides in the periplasm. The catalysed reaction is [protein]-peptidylproline (omega=180) = [protein]-peptidylproline (omega=0). Functionally, chaperone involved in the correct folding and assembly of outer membrane proteins. Recognizes specific patterns of aromatic residues and the orientation of their side chains, which are found more frequently in integral outer membrane proteins. May act in both early periplasmic and late outer membrane-associated steps of protein maturation. This is Chaperone SurA from Sodalis glossinidius (strain morsitans).